Here is a 156-residue protein sequence, read N- to C-terminus: Probable cyclic pyranopterin monophosphate synthase (156 aa).

Residues 74–76 (MCH) and 110–111 (ME) each bind substrate. Asp-125 is an active-site residue.

It belongs to the MoaC family. In terms of assembly, homohexamer; trimer of dimers.

It catalyses the reaction (8S)-3',8-cyclo-7,8-dihydroguanosine 5'-triphosphate = cyclic pyranopterin phosphate + diphosphate. It functions in the pathway cofactor biosynthesis; molybdopterin biosynthesis. Its function is as follows. Catalyzes the conversion of (8S)-3',8-cyclo-7,8-dihydroguanosine 5'-triphosphate to cyclic pyranopterin monophosphate (cPMP). This chain is Probable cyclic pyranopterin monophosphate synthase, found in Methanospirillum hungatei JF-1 (strain ATCC 27890 / DSM 864 / NBRC 100397 / JF-1).